The primary structure comprises 920 residues: 2-oxoadipate dehydrogenase complex component E1 (920 aa).

Residues 299-322 form a disordered region; that stretch reads QGKTRGRQQVKQDGDYSTDPHSRP. Residues 308–322 are compositionally biased toward basic and acidic residues; that stretch reads VKQDGDYSTDPHSRP.

It belongs to the alpha-ketoglutarate dehydrogenase family. The 2-oxoadipate dehydrogenase complex is composed of OADH (2-oxoadipate dehydrogenase; E1a), DLST (dihydrolipoamide succinyltransferase; E2) and DLD (dihydrolipoamide dehydrogenase; E3). E1a functional unit is a dimer. Thiamine diphosphate is required as a cofactor.

The protein localises to the mitochondrion. It carries out the reaction N(6)-[(R)-lipoyl]-L-lysyl-[protein] + 2-oxoadipate + H(+) = N(6)-[(R)-S(8)-glutaryldihydrolipoyl]-L-lysyl-[protein] + CO2. It participates in amino-acid degradation. Functionally, 2-oxoadipate dehydrogenase (E1a) component of the 2-oxoadipate dehydrogenase complex (OADHC). Participates in the first step, rate limiting for the overall conversion of 2-oxoadipate (alpha-ketoadipate) to glutaryl-CoA and CO(2) catalyzed by the whole OADHC. Catalyzes the irreversible decarboxylation of 2-oxoadipate via the thiamine diphosphate (ThDP) cofactor and subsequent transfer of the decarboxylated acyl intermediate on an oxidized dihydrolipoyl group that is covalently amidated to the E2 enzyme (dihydrolipoyllysine-residue succinyltransferase or DLST). Can catalyze the decarboxylation of 2-oxoglutarate in vitro, but at a much lower rate than 2-oxoadipate. Responsible for the last step of L-lysine, L-hydroxylysine and L-tryptophan catabolism with the common product being 2-oxoadipate. This Danio rerio (Zebrafish) protein is 2-oxoadipate dehydrogenase complex component E1 (dhtkd1).